A 158-amino-acid polypeptide reads, in one-letter code: Phosphopantetheine adenylyltransferase (158 aa).

A substrate-binding site is contributed by T10. ATP is bound by residues 10 to 11 (TF) and H18. 3 residues coordinate substrate: K42, L74, and R88. ATP is bound by residues 89 to 91 (GIR), E99, and 124 to 130 (WRYLSST).

This sequence belongs to the bacterial CoaD family. In terms of assembly, homohexamer. Mg(2+) serves as cofactor.

It is found in the cytoplasm. It catalyses the reaction (R)-4'-phosphopantetheine + ATP + H(+) = 3'-dephospho-CoA + diphosphate. It functions in the pathway cofactor biosynthesis; coenzyme A biosynthesis; CoA from (R)-pantothenate: step 4/5. In terms of biological role, reversibly transfers an adenylyl group from ATP to 4'-phosphopantetheine, yielding dephospho-CoA (dPCoA) and pyrophosphate. This chain is Phosphopantetheine adenylyltransferase, found in Actinobacillus pleuropneumoniae serotype 3 (strain JL03).